Here is a 356-residue protein sequence, read N- to C-terminus: D-alanine--D-alanine ligase (356 aa).

The ATP-grasp domain occupies 134-339; that stretch reads KQLFEHRGLP…YPELITKLIE (206 aa). 167–222 is a binding site for ATP; sequence NDKLNYPVFVKPANLGSSVGISKCNNEAELKEGIKEAFQFDRKLVIEQGVNAREIE. Residues aspartate 293, glutamate 306, and asparagine 308 each coordinate Mg(2+).

Belongs to the D-alanine--D-alanine ligase family. It depends on Mg(2+) as a cofactor. Mn(2+) serves as cofactor.

The protein resides in the cytoplasm. The enzyme catalyses 2 D-alanine + ATP = D-alanyl-D-alanine + ADP + phosphate + H(+). It functions in the pathway cell wall biogenesis; peptidoglycan biosynthesis. In terms of biological role, cell wall formation. In Staphylococcus aureus (strain Mu3 / ATCC 700698), this protein is D-alanine--D-alanine ligase.